A 334-amino-acid polypeptide reads, in one-letter code: Nucleoid-associated protein VS_0951 (334 aa).

The protein belongs to the YejK family.

It is found in the cytoplasm. It localises to the nucleoid. This is Nucleoid-associated protein VS_0951 from Vibrio atlanticus (strain LGP32) (Vibrio splendidus (strain Mel32)).